The following is an 85-amino-acid chain: U4-theraphotoxin-Hhn1ab (85 aa).

The N-terminal stretch at 1–22 is a signal peptide; that stretch reads MKVTLIAILTCAAVLVLHTTAA. Residues 23–48 constitute a propeptide that is removed on maturation; the sequence is EELEAESQLMEVGMPDTELAAVDEER. Cystine bridges form between Cys-56–Cys-77 and Cys-71–Cys-82.

The protein belongs to the neurotoxin 12 (Hwtx-2) family. 02 (Hwtx-2) subfamily. Expressed by the venom gland.

Its subcellular location is the secreted. Functionally, postsynaptic neurotoxin. The sequence is that of U4-theraphotoxin-Hhn1ab from Cyriopagopus hainanus (Chinese bird spider).